A 201-amino-acid polypeptide reads, in one-letter code: Recombination protein RecR (201 aa).

The C4-type zinc finger occupies 59–74 (CEICGNMDTENICCIC). Positions 82 to 177 (SVIAVVETVA…KISRLASGIP (96 aa)) constitute a Toprim domain.

It belongs to the RecR family.

In terms of biological role, may play a role in DNA repair. It seems to be involved in an RecBC-independent recombinational process of DNA repair. It may act with RecF and RecO. This Rickettsia felis (strain ATCC VR-1525 / URRWXCal2) (Rickettsia azadi) protein is Recombination protein RecR.